Reading from the N-terminus, the 440-residue chain is Chromosome partition protein MukF (440 aa).

The interval Leu-208–Ile-236 is leucine-zipper.

Belongs to the MukF family. As to quaternary structure, interacts, and probably forms a ternary complex, with MukE and MukB via its C-terminal region. The complex formation is stimulated by calcium or magnesium. It is required for an interaction between MukE and MukB.

The protein localises to the cytoplasm. It localises to the nucleoid. Involved in chromosome condensation, segregation and cell cycle progression. May participate in facilitating chromosome segregation by condensation DNA from both sides of a centrally located replisome during cell division. Not required for mini-F plasmid partitioning. Probably acts via its interaction with MukB and MukE. Overexpression results in anucleate cells. It has a calcium binding activity. This is Chromosome partition protein MukF from Citrobacter koseri (strain ATCC BAA-895 / CDC 4225-83 / SGSC4696).